The following is a 435-amino-acid chain: Manganese transport system membrane protein MntC (435 aa).

The next 9 helical transmembrane spans lie at 17–37 (VLAGTLLLGTASGVLGSFVLL), 42–62 (LIGDAMAHSALPGVCLAFLFT), 68–88 (PFFLLGAALAGLLGTFCIQLI), 98–118 (SAIGIVLSVFFGVGIILLTYI), 143–163 (QDIILIAGISAVLLLLCIVFF), 166–186 (FTLITFDLAFAKGLGIPVRFL), 189–209 (LLACLIVCAVVIGLQTVGVIL), 228–248 (LTGMIIIAGITGGVSGVAGTL), and 255–275 (GMATGPLMILSATLLFLFSMI).

This sequence belongs to the ABC-3 integral membrane protein family. The complex is probably composed of two ATP-binding proteins (MntB), two transmembrane proteins (MntC and MntD) and a solute-binding protein (MntA).

It localises to the cell membrane. In terms of biological role, probably part of the ABC transporter complex MntABCD involved in manganese import. Probably responsible for the translocation of the substrate across the membrane. The polypeptide is Manganese transport system membrane protein MntC (Bacillus subtilis (strain 168)).